The chain runs to 325 residues: Gamma-hemolysin component B (325 aa).

The N-terminal stretch at 1–25 (MNMNKLVKSSVATSMALLLLSNTAN) is a signal peptide.

It belongs to the aerolysin family. As to quaternary structure, toxicity requires sequential binding and synergistic association of a class S and a class F component which form heterooligomeric complexes. HlgB (class F) associates with either hlgA thus forming an AB toxin or with hlgC thus forming a CB toxin. Interacts with host AMFR.

In terms of biological role, toxin that seems to act by forming pores in the membrane of the cell. Has a hemolytic and a leucotoxic activity. Promotes host AMFR-mediated inflammation by mediating 'Lys-27'-linked ubiquitination of TAB3, TAK1-TAB3 complex formation and phosphorylation of TAK1/MAP3K7. In turn, activates host NF-kappa-B signaling pathway. This chain is Gamma-hemolysin component B (hlgB), found in Staphylococcus aureus (strain MRSA252).